The primary structure comprises 21 residues: Cardiotoxin-like basic polypeptide ah (21 aa).

Belongs to the three-finger toxin family. Short-chain subfamily. Orphan group XV sub-subfamily. In terms of processing, contains 4 disulfide bonds. Expressed by the venom gland.

It is found in the secreted. Its subcellular location is the target cell membrane. Its function is as follows. Has hemolytic activity under low-lecithin conditions. Has low cytotoxic activity. Inhibits the expression of VEGF and bFGF in human non-small-cell lung cancer cell line NCI-H1299 in a dose-dependent manner. The chain is Cardiotoxin-like basic polypeptide ah from Naja atra (Chinese cobra).